The chain runs to 485 residues: Inosine-5'-monophosphate dehydrogenase (485 aa).

CBS domains are found at residues isoleucine 97–valine 154 and methionine 155–serine 211. Residues aspartate 246 and glycine 295–glycine 297 each bind NAD(+). Residues glycine 297 and glycine 299 each coordinate K(+). Serine 300 lines the IMP pocket. Residue cysteine 302 participates in K(+) binding. The Thioimidate intermediate role is filled by cysteine 302. Residues aspartate 335–glycine 337, glycine 358–serine 359, and tyrosine 382–glycine 386 each bind IMP. The Proton acceptor role is filled by arginine 398. Glutamate 409 lines the IMP pocket. Positions 463, 464, and 465 each coordinate K(+).

This sequence belongs to the IMPDH/GMPR family. Homotetramer. The cofactor is K(+).

It catalyses the reaction IMP + NAD(+) + H2O = XMP + NADH + H(+). It functions in the pathway purine metabolism; XMP biosynthesis via de novo pathway; XMP from IMP: step 1/1. Mycophenolic acid (MPA) is a non-competitive inhibitor that prevents formation of the closed enzyme conformation by binding to the same site as the amobile flap. In contrast, mizoribine monophosphate (MZP) is a competitive inhibitor that induces the closed conformation. MPA is a potent inhibitor of mammalian IMPDHs but a poor inhibitor of the bacterial enzymes. MZP is a more potent inhibitor of bacterial IMPDH. Catalyzes the conversion of inosine 5'-phosphate (IMP) to xanthosine 5'-phosphate (XMP), the first committed and rate-limiting step in the de novo synthesis of guanine nucleotides, and therefore plays an important role in the regulation of cell growth. This Thermoplasma acidophilum (strain ATCC 25905 / DSM 1728 / JCM 9062 / NBRC 15155 / AMRC-C165) protein is Inosine-5'-monophosphate dehydrogenase.